The chain runs to 151 residues: Putative phosphatidylglycerol/phosphatidylinositol transfer protein 3 (151 aa).

The signal sequence occupies residues 1 to 26; that stretch reads MKYSQNQIVYVIFFFIILIVVKPIES.

This sequence belongs to the NPC2 family. Monomer.

In terms of biological role, catalyzes the intermembrane transfer of phosphatidylglycerol and phosphatidylinositol. The polypeptide is Putative phosphatidylglycerol/phosphatidylinositol transfer protein 3 (Dictyostelium discoideum (Social amoeba)).